Here is a 152-residue protein sequence, read N- to C-terminus: Endoribonuclease YbeY (152 aa).

Residues His-114, His-118, and His-124 each coordinate Zn(2+).

The protein belongs to the endoribonuclease YbeY family. Requires Zn(2+) as cofactor.

The protein resides in the cytoplasm. Its function is as follows. Single strand-specific metallo-endoribonuclease involved in late-stage 70S ribosome quality control and in maturation of the 3' terminus of the 16S rRNA. In Coxiella burnetii (strain CbuK_Q154) (Coxiella burnetii (strain Q154)), this protein is Endoribonuclease YbeY.